Consider the following 705-residue polypeptide: FAD-dependent monooxygenase ATEG_03635 (705 aa).

Residues 86–115 (DVLICGAGPFGLELGLILARQGISFRIVDK), Val-208, 308–310 (RFY), and Ser-408 contribute to the FAD site.

Belongs to the PheA/TfdB FAD monooxygenase family. FAD is required as a cofactor.

Its pathway is secondary metabolite biosynthesis. Its function is as follows. FAD-dependent monooxygenase; part of the cluster A that mediates the biosynthesis of azasperpyranones, members of the azaphilone family that exhibit anti-cancer activities. Azasperpyranones are synthesized by 2 clusters, A and B. Cluster A is responsible for the production of the polyhydric phenol moiety while the azaphilonoid scaffold is produced by the cluster B. The non-reducing polyketide synthase ATEG_03629 produces 5-methyl orsellinic acid, which is then reduced to 5-methyl orsellinic aldehyde by the NRPS-like protein ATEG_03630. 5-methyl orsellinic aldehyde is then first hydroxylated by the FAD-dependent monooxygenase ATEG_03635 and subsequently hydroxylated by the cytochrome P450 monooxygenase ATEG_03631 to produce the unstable polyhydric phenol precursor of azasperpyranones. On the other hand, the polyketide synthase ATEG_07659 is responsible for producing the 3,5-dimethyloctadienone moiety from acetyl-CoA, three malonyl-CoA, and two S-adenosyl methionines (SAM). The 3,5-dimethyloctadienone moiety is then loaded onto the SAT domain of ATEG_07661 and extended with four malonyl-CoA and one SAM, which leads to the formation of 2,4-dihydroxy-6-(5,7-dimethyl-2-oxo-trans-3-trans-5-nonadienyl)-3-methylbenzaldehyde (compound 8) after reductive release and aldol condensation. The FAD-dependent monooxygenase ATEG_07662 is the next enzyme in the biosynthesis sequence and hydroxylates the side chain at the benzylic position of compound 8. In Aspergillus nidulans, afoF, the ortholog of the FAD-dependent oxygenase ATEG_07660, is the key enzyme for the biosynthesis of asperfuranone by catalyzing the hydroxylation at C-8 of to prevent the formation of a six-membered ring hemiacetal intermediate and thus facilitating the formation of a five-membered ring to produce asperfuranone. In Aspergillus terreus, ATEG_07660 is probably not functional, which leads to the formation of the six-membered ring hemiacetal intermediate presperpyranone instead of asperfuranone. Finally, ATEG_03636 is involved in the condensation of the polyhydric phenol moiety produced by cluster A and the perasperpyranone precursor produced by cluster B, to yield azasperpyranone A. Further modifications of azasperpyranone A result in the production of derivatives, including azasperpyranone B to F. This Aspergillus terreus (strain NIH 2624 / FGSC A1156) protein is FAD-dependent monooxygenase ATEG_03635.